The primary structure comprises 294 residues: MNFQSVIATLNQFWSDRGCLIAQSYDTEKGAGTMNPHTFLRAIGPEPWSVAYVEPCRRPTDGRYGENPNRFQHYYQYQVLMKPSPNNIQDLYLDSLRALGIRPEDHDIRFVEDNWESPTLGAWGVGWEVWLDGMEITQFTYFQQCGSIDCRPVSIEITYGLERLAMYLQEVDAITKIAWTDNITYGDVYLQGEIEQCSYNFEASSPDFLFNLFGLYEQEAKQLIKRELVLPSLDYVLKCSHSFNLLDARGVISVTERTRYIGRIRNLARQVGQLYLQQREKLNFPLLKETMEAA.

The protein belongs to the class-II aminoacyl-tRNA synthetase family. In terms of assembly, tetramer of two alpha and two beta subunits.

The protein resides in the cytoplasm. The enzyme catalyses tRNA(Gly) + glycine + ATP = glycyl-tRNA(Gly) + AMP + diphosphate. The chain is Glycine--tRNA ligase alpha subunit from Trichodesmium erythraeum (strain IMS101).